A 295-amino-acid polypeptide reads, in one-letter code: Pantothenate synthetase (295 aa).

29 to 36 (MGALHSGH) is an ATP binding site. Histidine 36 acts as the Proton donor in catalysis. Glutamine 60 contacts (R)-pantoate. Beta-alanine is bound at residue glutamine 60. An ATP-binding site is contributed by 158 to 161 (GQKD). Residue glutamine 164 participates in (R)-pantoate binding. ATP-binding positions include valine 187 and 195–198 (LSSR).

Belongs to the pantothenate synthetase family. Homodimer.

It localises to the cytoplasm. The catalysed reaction is (R)-pantoate + beta-alanine + ATP = (R)-pantothenate + AMP + diphosphate + H(+). The protein operates within cofactor biosynthesis; (R)-pantothenate biosynthesis; (R)-pantothenate from (R)-pantoate and beta-alanine: step 1/1. In terms of biological role, catalyzes the condensation of pantoate with beta-alanine in an ATP-dependent reaction via a pantoyl-adenylate intermediate. The sequence is that of Pantothenate synthetase from Paenarthrobacter aurescens (strain TC1).